The chain runs to 276 residues: uncharacterized protein (276 aa).

A signal peptide spans 1–19 (MKKWLICSFVLVLLVSFTA). Residue C20 is the site of N-palmitoyl cysteine attachment. C20 carries S-diacylglycerol cysteine lipidation.

The protein belongs to the NlpA lipoprotein family.

It localises to the cell membrane. This is an uncharacterized protein from Bacillus subtilis (strain 168).